The primary structure comprises 423 residues: Polyglutamylase complex subunit TTLL1 (423 aa).

The region spanning 1 to 367 (MAGKVKWVTD…NGEIPDCKWN (367 aa)) is the TTL domain. ATP contacts are provided by residues Lys138, 144–145 (QG), 181–184 (SLYI), and 194–196 (KFD). Gln144 provides a ligand contact to a protein. Position 220 (Arg220) interacts with L-glutamate. An ATP-binding site is contributed by 241–242 (TN). Lys259 is an L-glutamate binding site. The Mg(2+) site is built by Asp313, Glu326, and Asn328. Lys344 contributes to the L-glutamate binding site. A disordered region spans residues 391–423 (GADRELRSRQGQSLGPRAGRSRDSGRAVLTTWK).

Belongs to the tubulin polyglutamylase family. As to quaternary structure, part of the neuronal tubulin polyglutamylase complex which contains TPGS1, TPGS2, TTLL1, LRRC49 and NICN1. Interacts with PCM1, CSTPP1 and LRRC49. Mg(2+) is required as a cofactor. In terms of tissue distribution, expressed in a wide range of tissues. Has a stronger expression in heart, brain and testis.

It is found in the cytoplasm. The protein localises to the cytoskeleton. The protein resides in the cilium basal body. It localises to the cilium axoneme. Its subcellular location is the cell projection. It is found in the cilium. The protein localises to the flagellum. It carries out the reaction (L-glutamyl)(n)-gamma-L-glutamyl-L-glutamyl-[protein] + L-glutamate + ATP = (L-glutamyl)(n+1)-gamma-L-glutamyl-L-glutamyl-[protein] + ADP + phosphate + H(+). In terms of biological role, catalytic subunit of a polyglutamylase complex which modifies tubulin, generating side chains of glutamate on the gamma-carboxyl group of specific glutamate residues within the C-terminal tail of tubulin. Probably involved in the side-chain elongation step of the polyglutamylation reaction rather than the initiation step. Modifies both alpha- and beta-tubulins with a preference for the alpha-tail. Unlike most polyglutamylases of the tubulin--tyrosine ligase family, only displays a catalytic activity when in complex with other proteins as it is most likely lacking domains important for autonomous activity. Part of the neuronal tubulin polyglutamylase complex. Mediates cilia and flagella polyglutamylation which is essential for their biogenesis and motility. Involved in respiratory motile cilia function through the regulation of beating asymmetry. Essential for sperm flagella biogenesis, motility and male fertility. Involved in KLF4 glutamylation which impedes its ubiquitination, thereby leading to somatic cell reprogramming, pluripotency maintenance and embryogenesis. This chain is Polyglutamylase complex subunit TTLL1, found in Homo sapiens (Human).